The primary structure comprises 204 residues: Small ribosomal subunit protein uS4 (204 aa).

Residues 21-45 (GRPKSPINKREYGPGQHGQRRKKPS) form a disordered region. The 64-residue stretch at 93-156 (RRLDAVVYRM…KQLAMVLDSV (64 aa)) folds into the S4 RNA-binding domain.

The protein belongs to the universal ribosomal protein uS4 family. As to quaternary structure, part of the 30S ribosomal subunit. Contacts protein S5. The interaction surface between S4 and S5 is involved in control of translational fidelity.

In terms of biological role, one of the primary rRNA binding proteins, it binds directly to 16S rRNA where it nucleates assembly of the body of the 30S subunit. With S5 and S12 plays an important role in translational accuracy. The sequence is that of Small ribosomal subunit protein uS4 from Acidiphilium cryptum (strain JF-5).